The primary structure comprises 334 residues: Phosphate acyltransferase (334 aa).

Belongs to the PlsX family. As to quaternary structure, homodimer. Probably interacts with PlsY.

It localises to the cytoplasm. The catalysed reaction is a fatty acyl-[ACP] + phosphate = an acyl phosphate + holo-[ACP]. It participates in lipid metabolism; phospholipid metabolism. Functionally, catalyzes the reversible formation of acyl-phosphate (acyl-PO(4)) from acyl-[acyl-carrier-protein] (acyl-ACP). This enzyme utilizes acyl-ACP as fatty acyl donor, but not acyl-CoA. The chain is Phosphate acyltransferase from Streptococcus thermophilus (strain CNRZ 1066).